The primary structure comprises 1215 residues: Zinc finger E-box-binding homeobox 2 (1215 aa).

The segment at Met-1–Glu-111 is disordered. A compositionally biased stretch (basic residues) spans Cys-12 to Asn-24. Residues Asp-57–Met-74 show a composition bias toward polar residues. The span at Arg-89–His-98 shows a compositional bias: basic and acidic residues. The residue at position 142 (Ser-142) is a Phosphoserine. 3 consecutive C2H2-type zinc fingers follow at residues Leu-211 to His-234, Phe-241 to His-263, and Phe-282 to His-304. The C2H2-type 4; atypical zinc finger occupies Tyr-310 to Cys-334. A phosphoserine mark is found at Ser-356, Ser-360, and Ser-364. N6-acetyllysine is present on Lys-377. Lys-391 is covalently cross-linked (Glycyl lysine isopeptide (Lys-Gly) (interchain with G-Cter in SUMO); alternate). Lys-391 is covalently cross-linked (Glycyl lysine isopeptide (Lys-Gly) (interchain with G-Cter in SUMO2); alternate). The segment at Gln-437–Lys-487 is SMAD-MH2 binding domain. Glycyl lysine isopeptide (Lys-Gly) (interchain with G-Cter in SUMO2) cross-links involve residues Lys-479 and Lys-555. The segment at Phe-581–Lys-605 adopts a C2H2-type 5; degenerate zinc-finger fold. Glycyl lysine isopeptide (Lys-Gly) (interchain with G-Cter in SUMO2) cross-links involve residues Lys-611 and Lys-632. Residues Gly-644–Ser-703 constitute a DNA-binding region (homeobox; atypical). Position 647 is a phosphoserine (Ser-647). Disordered stretches follow at residues Asn-702–Thr-740 and Val-772–Leu-811. A Glycyl lysine isopeptide (Lys-Gly) (interchain with G-Cter in SUMO2) cross-link involves residue Lys-713. Residues Ser-731 and Ser-780 each carry the phosphoserine modification. A compositionally biased stretch (low complexity) spans Ser-780–Ser-808. Thr-782 carries the phosphothreonine modification. Ser-784 is modified (phosphoserine). Residue Lys-866 forms a Glycyl lysine isopeptide (Lys-Gly) (interchain with G-Cter in SUMO); alternate linkage. Lys-866 is covalently cross-linked (Glycyl lysine isopeptide (Lys-Gly) (interchain with G-Cter in SUMO2); alternate). 2 consecutive C2H2-type zinc fingers follow at residues Tyr-999–His-1021 and His-1027–His-1049. A C2H2-type 8; atypical zinc finger spans residues Tyr-1055–His-1076. The interval Thr-1117 to Glu-1215 is disordered. A phosphoserine mark is found at Ser-1122 and Ser-1124. A compositionally biased stretch (basic and acidic residues) spans Arg-1127 to Gly-1149. A compositionally biased stretch (acidic residues) spans Asp-1157–Ser-1167. 2 stretches are compositionally biased toward basic and acidic residues: residues Glu-1168–Ile-1179 and Gly-1186–His-1205. A Phosphoserine modification is found at Ser-1203. Residues Glu-1206–Glu-1215 show a composition bias toward acidic residues.

The protein belongs to the delta-EF1/ZFH-1 C2H2-type zinc-finger family. Interacts with CBX4 and CTBP1. Binds activated SMAD1, activated SMAD2 and activated SMAD3; binding with SMAD4 is not detected. Post-translationally, sumoylation on Lys-391 and Lys-866 is promoted by the E3 SUMO-protein ligase CBX4, and impairs interaction with CTBP1 and transcription repression activity.

The protein localises to the nucleus. It is found in the chromosome. Transcriptional inhibitor that binds to DNA sequence 5'-CACCT-3' in different promoters. Represses transcription of E-cadherin. Represses expression of MEOX2. This Mus musculus (Mouse) protein is Zinc finger E-box-binding homeobox 2 (Zeb2).